The following is a 273-amino-acid chain: Rhamnulose-1-phosphate aldolase (273 aa).

Residue Glu-117 is part of the active site. His-140, His-142, and His-211 together coordinate Zn(2+).

The protein belongs to the aldolase class II family. RhaD subfamily. The cofactor is Zn(2+).

The protein resides in the cytoplasm. The catalysed reaction is L-rhamnulose 1-phosphate = (S)-lactaldehyde + dihydroxyacetone phosphate. The protein operates within carbohydrate degradation; L-rhamnose degradation; glycerone phosphate from L-rhamnose: step 3/3. Catalyzes the reversible cleavage of L-rhamnulose-1-phosphate to dihydroxyacetone phosphate (DHAP) and L-lactaldehyde. This Listeria monocytogenes serotype 4b (strain F2365) protein is Rhamnulose-1-phosphate aldolase.